Consider the following 357-residue polypeptide: Phospho-N-acetylmuramoyl-pentapeptide-transferase (357 aa).

10 consecutive transmembrane segments (helical) span residues 4 to 24 (QILF…PLLI), 52 to 72 (TMGG…SKVI), 77 to 97 (PTFS…VGFL), 115 to 135 (AKMA…LQFA), 153 to 173 (FGWT…ILAM), 186 to 206 (LATG…VWQF), 228 to 248 (PLDL…FLWW), 255 to 275 (IFMG…LAIC), 280 to 300 (LLVA…VIQV), and 334 to 354 (FWII…AGWA).

Belongs to the glycosyltransferase 4 family. MraY subfamily. The cofactor is Mg(2+).

It is found in the cell membrane. The enzyme catalyses UDP-N-acetyl-alpha-D-muramoyl-L-alanyl-gamma-D-glutamyl-meso-2,6-diaminopimeloyl-D-alanyl-D-alanine + di-trans,octa-cis-undecaprenyl phosphate = di-trans,octa-cis-undecaprenyl diphospho-N-acetyl-alpha-D-muramoyl-L-alanyl-D-glutamyl-meso-2,6-diaminopimeloyl-D-alanyl-D-alanine + UMP. It functions in the pathway cell wall biogenesis; peptidoglycan biosynthesis. Functionally, catalyzes the initial step of the lipid cycle reactions in the biosynthesis of the cell wall peptidoglycan: transfers peptidoglycan precursor phospho-MurNAc-pentapeptide from UDP-MurNAc-pentapeptide onto the lipid carrier undecaprenyl phosphate, yielding undecaprenyl-pyrophosphoryl-MurNAc-pentapeptide, known as lipid I. The protein is Phospho-N-acetylmuramoyl-pentapeptide-transferase of Streptomyces avermitilis (strain ATCC 31267 / DSM 46492 / JCM 5070 / NBRC 14893 / NCIMB 12804 / NRRL 8165 / MA-4680).